Here is a 419-residue protein sequence, read N- to C-terminus: Gamma-glutamyl phosphate reductase (419 aa).

This sequence belongs to the gamma-glutamyl phosphate reductase family.

The protein resides in the cytoplasm. The enzyme catalyses L-glutamate 5-semialdehyde + phosphate + NADP(+) = L-glutamyl 5-phosphate + NADPH + H(+). Its pathway is amino-acid biosynthesis; L-proline biosynthesis; L-glutamate 5-semialdehyde from L-glutamate: step 2/2. In terms of biological role, catalyzes the NADPH-dependent reduction of L-glutamate 5-phosphate into L-glutamate 5-semialdehyde and phosphate. The product spontaneously undergoes cyclization to form 1-pyrroline-5-carboxylate. This Marinomonas sp. (strain MWYL1) protein is Gamma-glutamyl phosphate reductase.